We begin with the raw amino-acid sequence, 80 residues long: Exodeoxyribonuclease 7 small subunit (80 aa).

The protein belongs to the XseB family. As to quaternary structure, heterooligomer composed of large and small subunits.

The protein localises to the cytoplasm. It carries out the reaction Exonucleolytic cleavage in either 5'- to 3'- or 3'- to 5'-direction to yield nucleoside 5'-phosphates.. In terms of biological role, bidirectionally degrades single-stranded DNA into large acid-insoluble oligonucleotides, which are then degraded further into small acid-soluble oligonucleotides. This is Exodeoxyribonuclease 7 small subunit from Pseudomonas fluorescens (strain Pf0-1).